We begin with the raw amino-acid sequence, 548 residues long: Glucose-6-phosphate isomerase (548 aa).

Glu-355 serves as the catalytic Proton donor. Residues His-386 and Lys-511 contribute to the active site.

Belongs to the GPI family.

The protein localises to the cytoplasm. The enzyme catalyses alpha-D-glucose 6-phosphate = beta-D-fructose 6-phosphate. The protein operates within carbohydrate biosynthesis; gluconeogenesis. It participates in carbohydrate degradation; glycolysis; D-glyceraldehyde 3-phosphate and glycerone phosphate from D-glucose: step 2/4. In terms of biological role, catalyzes the reversible isomerization of glucose-6-phosphate to fructose-6-phosphate. This Wigglesworthia glossinidia brevipalpis protein is Glucose-6-phosphate isomerase.